Reading from the N-terminus, the 121-residue chain is Small ribosomal subunit protein uS13 (121 aa).

The tract at residues 91 to 121 is disordered; sequence HRMSLPVRGQRTRTNARTRRGSRKTVAGRKK. Residues 100–121 are compositionally biased toward basic residues; that stretch reads QRTRTNARTRRGSRKTVAGRKK.

The protein belongs to the universal ribosomal protein uS13 family. As to quaternary structure, part of the 30S ribosomal subunit. Forms a loose heterodimer with protein S19. Forms two bridges to the 50S subunit in the 70S ribosome.

In terms of biological role, located at the top of the head of the 30S subunit, it contacts several helices of the 16S rRNA. In the 70S ribosome it contacts the 23S rRNA (bridge B1a) and protein L5 of the 50S subunit (bridge B1b), connecting the 2 subunits; these bridges are implicated in subunit movement. Contacts the tRNAs in the A and P-sites. In Prochlorococcus marinus (strain MIT 9211), this protein is Small ribosomal subunit protein uS13.